The primary structure comprises 423 residues: Probable histone-binding protein rbbD (423 aa).

6 WD repeats span residues 119 to 159 (NHEG…LEPT), 172 to 212 (GHKK…KSDS), 222 to 262 (GHTS…KPIH), 266 to 306 (AHNS…NRLH), 310 to 350 (SHTD…EEQN), and 367 to 407 (GHTS…YNDR).

Belongs to the WD repeat RBAP46/RBAP48/MSI1 family. Probably binds directly to helix 1 of the histone fold of histone H4, a region that is not accessible when H4 is in chromatin.

It is found in the nucleus. Its function is as follows. Core histone-binding subunit that may target chromatin assembly factors, chromatin remodeling factors and histone deacetylases to their histone substrates in a manner that is regulated by nucleosomal DNA. Component of several complexes which regulate chromatin metabolism. In Dictyostelium discoideum (Social amoeba), this protein is Probable histone-binding protein rbbD (rbbD).